Consider the following 262-residue polypeptide: MLLVIDVGNTNTVLGVFNGNTLIQDWRIRTIRESTVDEFNLLAKALFVDKKIDLSTIKRTVISSVVPPINSILDTFCTRYLNQKPLWIDPASVKNLMPICYSNPAEVGADRIVNAVAAFERYKTSMIIIDFGTATTFDAISAKGEYLGGAITPGVMISAEALFQRASKLPRVEIFRRPQNVIGKNTIDSIKSGIIYGNGALVDGMVKRMSKEMGTTPKVIATGGLAVLIADASETIEIVDNALTLEGLRIIADQPVFSEGQR.

ATP is bound at residue 6–13 (DVGNTNTV). Substrate is bound by residues Tyr-101 and 108–111 (GADR). Catalysis depends on Asp-110, which acts as the Proton acceptor. A K(+)-binding site is contributed by Asp-130. Residue Thr-133 coordinates ATP. Position 186 (Thr-186) interacts with substrate.

This sequence belongs to the type III pantothenate kinase family. Homodimer. It depends on NH4(+) as a cofactor. The cofactor is K(+).

The protein localises to the cytoplasm. The catalysed reaction is (R)-pantothenate + ATP = (R)-4'-phosphopantothenate + ADP + H(+). The protein operates within cofactor biosynthesis; coenzyme A biosynthesis; CoA from (R)-pantothenate: step 1/5. Functionally, catalyzes the phosphorylation of pantothenate (Pan), the first step in CoA biosynthesis. This chain is Type III pantothenate kinase, found in Desulforapulum autotrophicum (strain ATCC 43914 / DSM 3382 / VKM B-1955 / HRM2) (Desulfobacterium autotrophicum).